A 129-amino-acid polypeptide reads, in one-letter code: Glycine cleavage system H protein (129 aa).

One can recognise a Lipoyl-binding domain in the interval 24–106 (SYTVGITEHA…YGDGWFFRIM (83 aa)). The residue at position 65 (K65) is an N6-lipoyllysine.

This sequence belongs to the GcvH family. In terms of assembly, the glycine cleavage system is composed of four proteins: P, T, L and H. (R)-lipoate is required as a cofactor.

Its function is as follows. The glycine cleavage system catalyzes the degradation of glycine. The H protein shuttles the methylamine group of glycine from the P protein to the T protein. The sequence is that of Glycine cleavage system H protein from Shewanella denitrificans (strain OS217 / ATCC BAA-1090 / DSM 15013).